The primary structure comprises 87 residues: U3-theraphotoxin-Hhn1c (87 aa).

A signal peptide spans 1–24; sequence MVNMKASMFLTFAGLVLLFVVCHA. A propeptide spanning residues 25–52 is cleaved from the precursor; that stretch reads SESEEKEFPKEMLSSIFAVDDDFKQEER. 3 disulfides stabilise this stretch: C54–C67, C61–C72, and C66–C79.

Belongs to the neurotoxin 10 (Hwtx-1) family. 51 (Hntx-8) subfamily. Hntx-8 sub-subfamily. Expressed by the venom gland.

It is found in the secreted. Functionally, ion channel inhibitor. The sequence is that of U3-theraphotoxin-Hhn1c from Cyriopagopus hainanus (Chinese bird spider).